The following is a 142-amino-acid chain: SLSDKDKAAVRALWSKIGKSADAIGNDALSRMIVVYPQTKTYFSHWPDVTPGSAHIKAHGKKVMGGIALAVSKIDDLKAGLSDLSEQHAYKLRVDPANFKILNHCILVVISTMFPKDFTPEAHVSLDKFLSGVALALAERYR.

Serine 1 is modified (N-acetylserine). The 142-residue stretch at 1–142 (SLSDKDKAAV…VALALAERYR (142 aa)) folds into the Globin domain. O2 is bound at residue histidine 59. Residue histidine 88 participates in heme b binding.

It belongs to the globin family. In terms of assembly, hb1 is a heterotetramer of two alpha-2 chains and two beta chains, while Hb2 is a heterotetramer of two alpha-2 chains and two beta chains. In terms of tissue distribution, red blood cells.

Involved in oxygen transport from gills to the various peripheral tissues. The chain is Hemoglobin subunit alpha-1 (hba1) from Notothenia angustata (Rockcod).